The primary structure comprises 515 residues: Synaptic vesicular amine transporter (515 aa).

At 1–20 (MALSDLVLLRWLRDSRHSRK) the chain is on the cytoplasmic side. The chain crosses the membrane as a helical span at residues 21 to 41 (LILFIVFLALLLDNMLLTVVV). At 42 to 130 (PIIPSYLYSI…EDRDLLNENV (89 aa)) the chain is on the lumenal, vesicle side. Residues Asn-56, Asn-80, Asn-81, Asn-89, and Asn-111 are each glycosylated (N-linked (GlcNAc...) asparagine). Cys-118 and Cys-325 form a disulfide bridge. The helical transmembrane segment at 131 to 151 (QVGLLFASKATVQLLTNPFIG) threads the bilayer. The Cytoplasmic portion of the chain corresponds to 152–160 (LLTNRIGYP). The helical transmembrane segment at 161–181 (IPMFAGFCIMFISTVMFAFSS) threads the bilayer. At 182 to 190 (SYAFLLIAR) the chain is on the lumenal, vesicle side. Residues 191-211 (SLQGIGSSCSSVAGMGMLASV) traverse the membrane as a helical segment. Topologically, residues 212–220 (YTDDEERGK) are cytoplasmic. The helical transmembrane segment at 221-243 (PMGIALGGLAMGVLVGPPFGSVL) threads the bilayer. Residues Leu-229 and Val-233 each contribute to the serotonin site. At 244–249 (YEFVGK) the chain is on the lumenal, vesicle side. The chain crosses the membrane as a helical span at residues 250–272 (TAPFLVLAALVLLDGAIQLFVLQ). Over 273 to 292 (PSRVQPESQKGTPLTTLLKD) the chain is Cytoplasmic. A helical transmembrane segment spans residues 293–312 (PYILIAAGSICFANMGIAML). Serotonin-binding residues include Asn-306, Ile-309, Glu-313, Phe-335, and Tyr-342. Over 313–329 (EPALPIWMMETMCSRKW) the chain is Lumenal, vesicle. Residues 330–353 (QLGVAFLPASISYLIGTNIFGILA) traverse the membrane as a helical segment. At 354–358 (HKMGR) the chain is on the cytoplasmic side. A helical membrane pass occupies residues 359–379 (WLCALLGMVIVGISILCIPFA). The Lumenal, vesicle segment spans residues 380-390 (KNIYGLIAPNF). The chain crosses the membrane as a helical span at residues 391–411 (GVGFAIGMVDSSMMPIMGYLV). Position 400 (Asp-400) interacts with serotonin. Over 412 to 415 (DLRH) the chain is Cytoplasmic. The helical transmembrane segment at 416 to 436 (VSVYGSVYAIADVAFCMGYAI) threads the bilayer. A serotonin-binding site is contributed by Tyr-434. At 437-441 (GPSAG) the chain is on the lumenal, vesicle side. The helical transmembrane segment at 442-463 (GAIAKAIGFPWLMTIIGIIDIA) threads the bilayer. Topologically, residues 464–515 (FAPLCFFLRSPPAKEEKMAILMDHNCPIKRKMYTQNNVQSYPIGDDEESESD) are cytoplasmic. A phosphoserine; by CK2 mark is found at Ser-512 and Ser-514.

This sequence belongs to the major facilitator superfamily. Vesicular transporter family. Interacts with SLC6A3. As to expression, expressed in the substantia nigra and the tuberomammillary nucleus of the posterior hypothalamus. Expressed in stomach, in particular in varicose nerve fibers and enterochromaffin-like cells in the corpus region (at protein level).

It localises to the cytoplasmic vesicle. The protein localises to the secretory vesicle. Its subcellular location is the synaptic vesicle membrane. The protein resides in the secretory vesicle membrane. It is found in the cell projection. It localises to the axon. The protein localises to the dendrite. The enzyme catalyses serotonin(in) + 2 H(+)(out) = serotonin(out) + 2 H(+)(in). It catalyses the reaction dopamine(in) + 2 H(+)(out) = dopamine(out) + 2 H(+)(in). It carries out the reaction histamine(in) + 2 H(+)(out) = histamine(out) + 2 H(+)(in). Its activity is regulated as follows. Strongly inhibited by reserpine and tetrabenazine. Also inhibited to a lesser extent by ketanserin and fenfluramine. Reserpine and ketanserin inhibit by blocking the substrate-binding pocket. Tetrabenazine traps SLC18A2/VMAT2 in an occluded conformation and its inhibition is specific to SLC18A2/VMAT2 but not SLC18A1/VMAT1. Functionally, electrogenic antiporter that exchanges one cationic monoamine with two intravesicular protons across the membrane of secretory and synaptic vesicles. Uses the electrochemical proton gradient established by the V-type proton-pump ATPase to accumulate high concentrations of monoamines inside the vesicles prior to their release via exocytosis. Transports a variety of catecholamines such as dopamine, adrenaline and noradrenaline, histamine, and indolamines such as serotonin. Regulates the transvesicular monoaminergic gradient that determines the quantal size. Mediates somatodendritic dopamine release in hippocampal neurons, likely as part of a regulated secretory pathway that integrates retrograde synaptic signals. Acts as a primary transporter for striatal dopamine loading ensuring impulse-dependent release of dopamine at the synaptic cleft. Responsible for histamine and serotonin storage and subsequent corelease from mast cell granules. This chain is Synaptic vesicular amine transporter (Slc18a2), found in Rattus norvegicus (Rat).